The chain runs to 143 residues: Transcriptional regulator MraZ (143 aa).

2 SpoVT-AbrB domains span residues 5-47 (EYSH…PMAV) and 76-119 (ALEA…SAEN).

The protein belongs to the MraZ family. Forms oligomers.

It is found in the cytoplasm. It localises to the nucleoid. The protein is Transcriptional regulator MraZ of Leuconostoc mesenteroides subsp. mesenteroides (strain ATCC 8293 / DSM 20343 / BCRC 11652 / CCM 1803 / JCM 6124 / NCDO 523 / NBRC 100496 / NCIMB 8023 / NCTC 12954 / NRRL B-1118 / 37Y).